The sequence spans 360 residues: MERVYNFSAGPSILPLPVLEKVQKELVNYNGTGMSIMEMSHRSSYFQSIIDEASNLLRELMNIPNEYDVLFLQGGASLQFSMIPLNLMNTYKKAGYVLTGSWSKKALQEAEKVGEVQVIASSENEKFTTIPKLDGLLGDEKLDYVHITTNNTIEGTKYVDIPRVDKVPLVADMSSNILSERYDVSKFGLIYAGAQKNLGPAGLTIAIIKRDLIGGADRYCPTMLNYETYSKNNSLYNTPPSFSIYVTKLVLEWLKEQGGVSAIEEQNKMKSSLLYNFLDESKLFTSPVDPTYRSLMNIPFTTPSEELNNEFLQKAKERGLVTLKGHRSVGGMRASIYNAMPVQGVQQLVNYMKEFELENR.

Arg42 provides a ligand contact to L-glutamate. Pyridoxal 5'-phosphate contacts are provided by residues 76 to 77, Trp102, Thr152, Asp172, and Gln195; that span reads AS. N6-(pyridoxal phosphate)lysine is present on Lys196. Position 237-238 (237-238) interacts with pyridoxal 5'-phosphate; the sequence is NT.

Belongs to the class-V pyridoxal-phosphate-dependent aminotransferase family. SerC subfamily. As to quaternary structure, homodimer. Pyridoxal 5'-phosphate is required as a cofactor.

Its subcellular location is the cytoplasm. The enzyme catalyses O-phospho-L-serine + 2-oxoglutarate = 3-phosphooxypyruvate + L-glutamate. The catalysed reaction is 4-(phosphooxy)-L-threonine + 2-oxoglutarate = (R)-3-hydroxy-2-oxo-4-phosphooxybutanoate + L-glutamate. Its pathway is amino-acid biosynthesis; L-serine biosynthesis; L-serine from 3-phospho-D-glycerate: step 2/3. Its function is as follows. Catalyzes the reversible conversion of 3-phosphohydroxypyruvate to phosphoserine and of 3-hydroxy-2-oxo-4-phosphonooxybutanoate to phosphohydroxythreonine. The sequence is that of Phosphoserine aminotransferase from Bacillus cereus (strain ZK / E33L).